A 697-amino-acid polypeptide reads, in one-letter code: Mediator of RNA polymerase II transcription subunit 16 (697 aa).

WD repeat units lie at residues 68–107 (GHQEVITCLEWDQSGSRLLSADADGRIKCWGMTDHLANSW), 199–241 (RCRV…VSEK), 264–308 (DKFP…LPLN), and 622–663 (NQGS…CLPV).

This sequence belongs to the Mediator complex subunit 16 family. As to quaternary structure, component of the Mediator complex.

The protein resides in the nucleus. Functionally, component of the Mediator complex, a coactivator involved in the regulated transcription of nearly all RNA polymerase II-dependent genes. Mediator functions as a bridge to convey information from gene-specific regulatory proteins to the basal RNA polymerase II transcription machinery. Mediator is recruited to promoters by direct interactions with regulatory proteins and serves as a scaffold for the assembly of a functional preinitiation complex with RNA polymerase II and the general transcription factors. The sequence is that of Mediator of RNA polymerase II transcription subunit 16 (med16) from Xenopus laevis (African clawed frog).